Reading from the N-terminus, the 104-residue chain is Evasin P1174 (104 aa).

Positions 1–27 are cleaved as a signal peptide; it reads LKTFCLFLQIAVFIALGIQIFLCGTDA. Intrachain disulfides connect C40–C59, C44–C61, and C55–C72. Residues N43, N49, and N58 are each glycosylated (N-linked (GlcNAc...) asparagine). The segment at 85–104 is disordered; it reads KPTSEEIADASPRPKETNSH.

Its subcellular location is the secreted. Its function is as follows. Salivary chemokine-binding protein which binds to host chemokines CXCL1 and CXCL8. The protein is Evasin P1174 of Ixodes ricinus (Common tick).